Consider the following 331-residue polypeptide: Phenylalanine--tRNA ligase alpha subunit (331 aa).

Residue glutamate 252 coordinates Mg(2+).

Belongs to the class-II aminoacyl-tRNA synthetase family. Phe-tRNA synthetase alpha subunit type 1 subfamily. In terms of assembly, tetramer of two alpha and two beta subunits. Mg(2+) serves as cofactor.

The protein resides in the cytoplasm. It catalyses the reaction tRNA(Phe) + L-phenylalanine + ATP = L-phenylalanyl-tRNA(Phe) + AMP + diphosphate + H(+). In Xanthomonas euvesicatoria pv. vesicatoria (strain 85-10) (Xanthomonas campestris pv. vesicatoria), this protein is Phenylalanine--tRNA ligase alpha subunit.